A 474-amino-acid chain; its full sequence is tRNA-2-methylthio-N(6)-dimethylallyladenosine synthase (474 aa).

Positions 3-120 (KKLHIKTWGC…LPDMIEQVRR (118 aa)) constitute an MTTase N-terminal domain. [4Fe-4S] cluster contacts are provided by Cys12, Cys49, Cys83, Cys157, Cys161, and Cys164. The Radical SAM core domain maps to 143–375 (RAEGPTAFVS…QDRITQQAMR (233 aa)). Residues 378 to 441 (RHMMGTVQRI…TNSLRGKFIR (64 aa)) enclose the TRAM domain.

The protein belongs to the methylthiotransferase family. MiaB subfamily. In terms of assembly, monomer. [4Fe-4S] cluster serves as cofactor.

The protein resides in the cytoplasm. The catalysed reaction is N(6)-dimethylallyladenosine(37) in tRNA + (sulfur carrier)-SH + AH2 + 2 S-adenosyl-L-methionine = 2-methylsulfanyl-N(6)-dimethylallyladenosine(37) in tRNA + (sulfur carrier)-H + 5'-deoxyadenosine + L-methionine + A + S-adenosyl-L-homocysteine + 2 H(+). Its function is as follows. Catalyzes the methylthiolation of N6-(dimethylallyl)adenosine (i(6)A), leading to the formation of 2-methylthio-N6-(dimethylallyl)adenosine (ms(2)i(6)A) at position 37 in tRNAs that read codons beginning with uridine. This Shewanella sp. (strain MR-4) protein is tRNA-2-methylthio-N(6)-dimethylallyladenosine synthase.